The sequence spans 222 residues: UPF0758 protein Ppha_0935 (222 aa).

In terms of domain architecture, MPN spans 100–222; that stretch reads KIQAARDVFE…CFSFRESGLL (123 aa). Zn(2+) contacts are provided by His171, His173, and Asp184. The short motif at 171-184 is the JAMM motif element; that stretch reads HNHPSGDVEPSNAD.

This sequence belongs to the UPF0758 family.

This Pelodictyon phaeoclathratiforme (strain DSM 5477 / BU-1) protein is UPF0758 protein Ppha_0935.